The chain runs to 122 residues: Large ribosomal subunit protein uL14 (122 aa).

This sequence belongs to the universal ribosomal protein uL14 family. As to quaternary structure, part of the 50S ribosomal subunit. Forms a cluster with proteins L3 and L19. In the 70S ribosome, L14 and L19 interact and together make contacts with the 16S rRNA in bridges B5 and B8.

Binds to 23S rRNA. Forms part of two intersubunit bridges in the 70S ribosome. The protein is Large ribosomal subunit protein uL14 of Desulfatibacillum aliphaticivorans.